A 448-amino-acid chain; its full sequence is Iroquois-class homeodomain protein irx-3 (448 aa).

Residues 108-170 constitute a DNA-binding region (homeobox; TALE-type); sequence DPSRPKNATR…NARRRLKKEN (63 aa). Disordered stretches follow at residues 171–250 and 387–410; these read KMTW…NAPE and SGTASFPKAAEPKHSTDSLTDRSS. A compositionally biased stretch (acidic residues) spans 195–222; sequence KHEDDEEIDLENIDTEDIESKEDLDDPD. Basic and acidic residues predominate over residues 223–237; it reads TDIHSDSKTDARSDS. A compositionally biased stretch (acidic residues) spans 238–248; the sequence is EASDGFEDLNA. Positions 396-406 are enriched in basic and acidic residues; the sequence is AEPKHSTDSLT.

Belongs to the TALE/IRO homeobox family. Expressed in the neural plate in overlapping patterns with other irx members, which all share an anterior border of expression. Outside the nervous system and at tailbud stages, expressed in the developing otic vesicle, branchial arches, prospective heart region and pronephros.

The protein localises to the nucleus. In terms of biological role, acts partially redundantly with other irx members in neural patterning. Required for formation of the posterior forebrain, midbrain, hindbrain, and to a lesser extent, spinal cord. Both up-regulates and down-regulates gene expression during neural development. Acts early in neural plate development to induce proneural gene expression and specify a neural precursor state. Also up-regulates repressors that prevent neuronal differentiation. Required during at least two stages of pronephros kidney development; during neurula stages, maintains transcription of key renal genes to define the size and identity of the pronephric anlage, probably in part through regulation of bmp-signaling. Subsequently required for proper formation of the intermediate tubule segment of the pronephros. This chain is Iroquois-class homeodomain protein irx-3, found in Xenopus tropicalis (Western clawed frog).